The chain runs to 243 residues: 1-(5-phosphoribosyl)-5-[(5-phosphoribosylamino)methylideneamino] imidazole-4-carboxamide isomerase (243 aa).

The active-site Proton acceptor is the Asp-8. Residue Asp-129 is the Proton donor of the active site.

The protein belongs to the HisA/HisF family.

The protein localises to the cytoplasm. The enzyme catalyses 1-(5-phospho-beta-D-ribosyl)-5-[(5-phospho-beta-D-ribosylamino)methylideneamino]imidazole-4-carboxamide = 5-[(5-phospho-1-deoxy-D-ribulos-1-ylimino)methylamino]-1-(5-phospho-beta-D-ribosyl)imidazole-4-carboxamide. Its pathway is amino-acid biosynthesis; L-histidine biosynthesis; L-histidine from 5-phospho-alpha-D-ribose 1-diphosphate: step 4/9. This chain is 1-(5-phosphoribosyl)-5-[(5-phosphoribosylamino)methylideneamino] imidazole-4-carboxamide isomerase, found in Brucella suis biovar 1 (strain 1330).